The chain runs to 153 residues: Regulatory protein RecX (153 aa).

It belongs to the RecX family.

The protein resides in the cytoplasm. Functionally, modulates RecA activity. The protein is Regulatory protein RecX of Vibrio vulnificus (strain CMCP6).